We begin with the raw amino-acid sequence, 193 residues long: AP-3 complex subunit sigma-2 (193 aa).

The protein belongs to the adaptor complexes small subunit family. In terms of assembly, adaptor protein complex 3 (AP-3) is a heterotetramer composed of two large adaptins (delta-type subunit AP3D1 and beta-type subunit AP3B1 or AP3B2), a medium adaptin (mu-type subunit AP3M1 or AP3M2) and a small adaptin (sigma-type subunit APS1 or AP3S2). Interacts with AGAP1. AP-3 associates with the BLOC-1 complex. In terms of tissue distribution, present in all adult tissues examined.

Its subcellular location is the golgi apparatus. It localises to the cytoplasmic vesicle membrane. In terms of biological role, part of the AP-3 complex, an adaptor-related complex which is not clathrin-associated. The complex is associated with the Golgi region as well as more peripheral structures. It facilitates the budding of vesicles from the Golgi membrane and may be directly involved in trafficking to lysosomes. In concert with the BLOC-1 complex, AP-3 is required to target cargos into vesicles assembled at cell bodies for delivery into neurites and nerve terminals. This is AP-3 complex subunit sigma-2 (AP3S2) from Homo sapiens (Human).